The chain runs to 168 residues: MSTQSVSSHNIESSSFSANQHAAEPSVATGGIISEIVYNADQPIVTHLLLPLLQQLGTQSRWLLWLSPQQRLSRPWVQQSGLPLDKMVQLHHINPLFTVDAMERALLTGNYSAVLCWLPHELTEEEKVRLRHAAQAGNTYGFIMRPESAGDDAYRLFPSLKIHSTLYH.

Positions 1–20 (MSTQSVSSHNIESSSFSANQ) are disordered. Residues 105–111 (ALLTGNY) are ftsZ binding. The lon protease binding stretch occupies residues 161–168 (KIHSTLYH).

Belongs to the SulA family. As to quaternary structure, interacts with FtsZ. In terms of processing, is rapidly cleaved and degraded by the Lon protease once DNA damage is repaired.

Component of the SOS system and an inhibitor of cell division. Accumulation of SulA causes rapid cessation of cell division and the appearance of long, non-septate filaments. In the presence of GTP, binds a polymerization-competent form of FtsZ in a 1:1 ratio, thus inhibiting FtsZ polymerization and therefore preventing it from participating in the assembly of the Z ring. This mechanism prevents the premature segregation of damaged DNA to daughter cells during cell division. The chain is Cell division inhibitor SulA from Pectobacterium atrosepticum (strain SCRI 1043 / ATCC BAA-672) (Erwinia carotovora subsp. atroseptica).